Reading from the N-terminus, the 539-residue chain is Phosphoenolpyruvate carboxykinase (ATP) (539 aa).

Substrate is bound by residues Arg-64, Tyr-206, and Lys-212. Residues Lys-212, His-231, and 247–255 (GLSGTGKTT) each bind ATP. Mn(2+) is bound by residues Lys-212 and His-231. Residue Asp-268 participates in Mn(2+) binding. Residues Glu-296, Arg-332, 448 to 449 (RI), and Thr-454 contribute to the ATP site. Residue Arg-332 participates in substrate binding.

It belongs to the phosphoenolpyruvate carboxykinase (ATP) family. In terms of assembly, monomer. It depends on Mn(2+) as a cofactor.

The protein resides in the cytoplasm. It carries out the reaction oxaloacetate + ATP = phosphoenolpyruvate + ADP + CO2. It participates in carbohydrate biosynthesis; gluconeogenesis. Its function is as follows. Involved in the gluconeogenesis. Catalyzes the conversion of oxaloacetate (OAA) to phosphoenolpyruvate (PEP) through direct phosphoryl transfer between the nucleoside triphosphate and OAA. This is Phosphoenolpyruvate carboxykinase (ATP) from Pectobacterium atrosepticum (strain SCRI 1043 / ATCC BAA-672) (Erwinia carotovora subsp. atroseptica).